Reading from the N-terminus, the 159-residue chain is MRVYLGSDHAGFELKQQIIAHLEQSGHQPIDCGAFSYDADDDYPAFCIAAATRTVADPDSLGIVLGGSGNGEQIAANKVPGARCALAWSVETAQLAREHNNAQLIGIGGRMHTVAEALAIVDAFVTTPWSKAPRHQRRIDILAEYERTHQAPPVPGAVG.

D-ribulose 5-phosphate contacts are provided by residues 8–9 (DH) and 67–71 (GSGNG). Glutamate 72 functions as the Proton acceptor in the catalytic mechanism. Residue histidine 99 is the Proton donor of the active site. D-ribulose 5-phosphate-binding residues include asparagine 100, arginine 110, arginine 134, and arginine 138.

It belongs to the LacAB/RpiB family. Homodimer.

It catalyses the reaction aldehydo-D-ribose 5-phosphate = D-ribulose 5-phosphate. It functions in the pathway carbohydrate degradation; pentose phosphate pathway; D-ribose 5-phosphate from D-ribulose 5-phosphate (non-oxidative stage): step 1/1. Catalyzes the interconversion of ribulose-5-P and ribose-5-P. The sequence is that of Ribose-5-phosphate isomerase B from Mycolicibacterium paratuberculosis (strain ATCC BAA-968 / K-10) (Mycobacterium paratuberculosis).